We begin with the raw amino-acid sequence, 51 residues long: Sperm protamine P1 (51 aa).

It belongs to the protamine P1 family. Testis.

It localises to the nucleus. The protein localises to the chromosome. In terms of biological role, protamines substitute for histones in the chromatin of sperm during the haploid phase of spermatogenesis. They compact sperm DNA into a highly condensed, stable and inactive complex. This chain is Sperm protamine P1 (PRM1), found in Piliocolobus badius (Western red colobus).